We begin with the raw amino-acid sequence, 156 residues long: Small ribosomal subunit protein uS7 (156 aa).

The protein belongs to the universal ribosomal protein uS7 family. In terms of assembly, part of the 30S ribosomal subunit. Contacts proteins S9 and S11.

In terms of biological role, one of the primary rRNA binding proteins, it binds directly to 16S rRNA where it nucleates assembly of the head domain of the 30S subunit. Is located at the subunit interface close to the decoding center, probably blocks exit of the E-site tRNA. The chain is Small ribosomal subunit protein uS7 from Bifidobacterium longum subsp. infantis (strain ATCC 15697 / DSM 20088 / JCM 1222 / NCTC 11817 / S12).